The primary structure comprises 80 residues: MSDTLKRLQKIVSEQLSVDPEKVTSTADFGKQLGADSLDIIELIMTIEYEFNIDIEDHYASKITTVQDALNYIENKIKQK.

The 76-residue stretch at 2–77 folds into the Carrier domain; it reads SDTLKRLQKI…DALNYIENKI (76 aa). The residue at position 37 (S37) is an O-(pantetheine 4'-phosphoryl)serine.

Belongs to the acyl carrier protein (ACP) family. Post-translationally, 4'-phosphopantetheine is transferred from CoA to a specific serine of apo-ACP by AcpS. This modification is essential for activity because fatty acids are bound in thioester linkage to the sulfhydryl of the prosthetic group.

It is found in the plastid. The protein resides in the chloroplast. The protein operates within lipid metabolism; fatty acid biosynthesis. Functionally, carrier of the growing fatty acid chain in fatty acid biosynthesis. The sequence is that of Acyl carrier protein from Cylindrotheca sp. (strain N1) (Marine diatom).